A 332-amino-acid polypeptide reads, in one-letter code: L-lactate dehydrogenase A chain (332 aa).

NAD(+) contacts are provided by residues 29 to 57 (GMVGMASAISILLKDLCDELALVDVMEDK) and R99. 3 residues coordinate substrate: R106, N138, and R169. N138 is a binding site for NAD(+). Residue H193 is the Proton acceptor of the active site. Substrate is bound at residue T248.

This sequence belongs to the LDH/MDH superfamily. LDH family. Homotetramer.

It localises to the cytoplasm. The catalysed reaction is (S)-lactate + NAD(+) = pyruvate + NADH + H(+). Its pathway is fermentation; pyruvate fermentation to lactate; (S)-lactate from pyruvate: step 1/1. Functionally, interconverts simultaneously and stereospecifically pyruvate and lactate with concomitant interconversion of NADH and NAD(+). This is L-lactate dehydrogenase A chain (ldha) from Gillichthys seta (Shortjaw mudsucker).